The primary structure comprises 407 residues: MFLNSLDLPGQPEDSRIVVAMSGGVDSSVVAGLLKREGYNVIGITLQLYDHGAATHRVGACCAGQDIEDARRVAEMLGIPHYVLDYEKRFREAVIDPFAESYAHGETPVPCIACNQTVKFADLLATARELGADALATGHYIRSRSHGAHRALFRPLDNDRDQSYFLFATTQEQIDYLRFPLGDLPKARVREIAAEMGLVVANKHDSQDICFVPQGKYSDVIAKLRPEAANPGFIVHIDGKILGKHSGIVNYTVGQRRGIGVSTGEALYVVYLDVENARVIVGPREMLETHKLFLRDVNWLGDESLDNFPSQGIEVAVKVRSTRPPHLACLHYKEGVFSVDLLECENGVAPGQACVLYDGNGHEARILGGGFVTHSERAADIEVMLKRVLCNLETKDSVSSQLKTTAS.

Residues 20 to 27 (AMSGGVDS) and L46 each bind ATP. C114 acts as the Nucleophile in catalysis. A disulfide bridge connects residues C114 and C210. G138 contacts ATP. The segment at 160–162 (RDQ) is interaction with tRNA. C210 acts as the Cysteine persulfide intermediate in catalysis.

It belongs to the MnmA/TRMU family.

The protein resides in the cytoplasm. The catalysed reaction is S-sulfanyl-L-cysteinyl-[protein] + uridine(34) in tRNA + AH2 + ATP = 2-thiouridine(34) in tRNA + L-cysteinyl-[protein] + A + AMP + diphosphate + H(+). In terms of biological role, catalyzes the 2-thiolation of uridine at the wobble position (U34) of tRNA, leading to the formation of s(2)U34. The protein is tRNA-specific 2-thiouridylase MnmA of Bartonella tribocorum (strain CIP 105476 / IBS 506).